We begin with the raw amino-acid sequence, 131 residues long: Small ribosomal subunit protein uS8 (131 aa).

It belongs to the universal ribosomal protein uS8 family. As to quaternary structure, part of the 30S ribosomal subunit. Contacts proteins S5 and S12.

In terms of biological role, one of the primary rRNA binding proteins, it binds directly to 16S rRNA central domain where it helps coordinate assembly of the platform of the 30S subunit. The chain is Small ribosomal subunit protein uS8 from Chlorobium phaeovibrioides (strain DSM 265 / 1930) (Prosthecochloris vibrioformis (strain DSM 265)).